The primary structure comprises 203 residues: High frequency lysogenization protein HflD homolog (203 aa).

Belongs to the HflD family.

It localises to the cytoplasm. The protein resides in the cell inner membrane. The polypeptide is High frequency lysogenization protein HflD homolog (Vesicomyosocius okutanii subsp. Calyptogena okutanii (strain HA)).